A 399-amino-acid chain; its full sequence is All trans-polyprenyl-diphosphate synthase PDSS2 (399 aa).

Belongs to the FPP/GGPP synthase family. As to quaternary structure, heterotetramer composed of 2 PDSS1/DPS1 and 2 PDSS2/DLP1 subunits.

The protein localises to the mitochondrion. It carries out the reaction 7 isopentenyl diphosphate + (2E,6E)-farnesyl diphosphate = all-trans-decaprenyl diphosphate + 7 diphosphate. It catalyses the reaction 6 isopentenyl diphosphate + (2E,6E)-farnesyl diphosphate = all-trans-nonaprenyl diphosphate + 6 diphosphate. Its pathway is cofactor biosynthesis; ubiquinone biosynthesis. Its function is as follows. Heterotetrameric enzyme that catalyzes the condensation of farnesyl diphosphate (FPP), which acts as a primer, and isopentenyl diphosphate (IPP) to produce prenyl diphosphates of varying chain lengths and participates in the determination of the side chain of ubiquinone. Supplies nona and decaprenyl diphosphate, the precursors for the side chain of the isoprenoid quinones ubiquinone-9 (Q9) and ubiquinone-10 (Q10) respectively. The enzyme adds isopentenyl diphosphate molecules sequentially to farnesyl diphosphate with trans stereochemistry. May play a role during cerebellar development. May regulate mitochondrial respiratory chain function. The protein is All trans-polyprenyl-diphosphate synthase PDSS2 of Homo sapiens (Human).